A 521-amino-acid chain; its full sequence is Glutamate--tRNA ligase (521 aa).

The 'HIGH' region motif lies at 13 to 23 (PSPSGFLHVGG). The short motif at 253–257 (KLSKR) is the 'KMSKS' region element. Residue Lys256 coordinates ATP.

Belongs to the class-I aminoacyl-tRNA synthetase family. Glutamate--tRNA ligase type 1 subfamily. Monomer.

The protein resides in the cytoplasm. The catalysed reaction is tRNA(Glu) + L-glutamate + ATP = L-glutamyl-tRNA(Glu) + AMP + diphosphate. Catalyzes the attachment of glutamate to tRNA(Glu) in a two-step reaction: glutamate is first activated by ATP to form Glu-AMP and then transferred to the acceptor end of tRNA(Glu). This is Glutamate--tRNA ligase from Leptospira interrogans serogroup Icterohaemorrhagiae serovar copenhageni (strain Fiocruz L1-130).